The following is a 227-amino-acid chain: PKHD-type hydroxylase Bphy_5374 (227 aa).

Positions Lys-79–Ser-179 constitute a Fe2OG dioxygenase domain. Fe cation is bound by residues His-97, Asp-99, and His-160. Arg-170 lines the 2-oxoglutarate pocket.

Fe(2+) serves as cofactor. Requires L-ascorbate as cofactor.

The protein is PKHD-type hydroxylase Bphy_5374 of Paraburkholderia phymatum (strain DSM 17167 / CIP 108236 / LMG 21445 / STM815) (Burkholderia phymatum).